Here is a 38-residue protein sequence, read N- to C-terminus: Large ribosomal subunit protein bL36 (38 aa).

It belongs to the bacterial ribosomal protein bL36 family.

The sequence is that of Large ribosomal subunit protein bL36 from Phytoplasma australiense.